Here is a 107-residue protein sequence, read N- to C-terminus: U1-lycotoxin-Ls1a (107 aa).

The first 20 residues, 1 to 20, serve as a signal peptide directing secretion; it reads MMKVLVVVALLVTLISYSSS. Residues 21-41 constitute a propeptide that is removed on maturation; it reads EGIDDLEADELLSLMANEQTR. Intrachain disulfides connect Cys-44–Cys-59, Cys-51–Cys-68, Cys-58–Cys-86, and Cys-70–Cys-84.

The protein belongs to the neurotoxin 19 (CSTX) family. 04 (U1-Lctx) subfamily. In terms of tissue distribution, expressed by the venom gland.

It localises to the secreted. In Lycosa singoriensis (Wolf spider), this protein is U1-lycotoxin-Ls1a.